Reading from the N-terminus, the 151-residue chain is Austinoid biosynthesis clusters protein F (151 aa).

It belongs to the trt14 isomerase family. In terms of assembly, homodimer.

Its pathway is secondary metabolite biosynthesis; terpenoid biosynthesis. Functionally, part of the gene cluster B that mediates the biosynthesis of the fungal meroterpenoid acetoxydehydroaustin. The first step of the pathway is the synthesis of 3,5-dimethylorsellinic acid by the polyketide synthase ausA. 3,5-dimethylorsellinic acid is then prenylated by the polyprenyl transferase ausN. Further epoxidation by the FAD-dependent monooxygenase ausM and cyclization by the probable terpene cyclase ausL lead to the formation of protoaustinoid A. Protoaustinoid A is then oxidized to spiro-lactone preaustinoid A3 by the combined action of the FAD-binding monooxygenases ausB and ausC, and the dioxygenase ausE. Acid-catalyzed keto-rearrangement and ring contraction of the tetraketide portion of preaustinoid A3 by ausJ lead to the formation of preaustinoid A4. The aldo-keto reductase ausK, with the help of ausH, is involved in the next step by transforming preaustinoid A4 into isoaustinone which is in turn hydroxylated by the P450 monooxygenase ausI to form austinolide. The cytochrome P450 monooxygenase ausG then modifies austinolide to austinol. Austinol is further acetylated to austin by the O-acetyltransferase ausP, which spontaneously changes to dehydroaustin. The cytochrome P450 monooxygenase then converts dehydroaustin is into 7-dehydrodehydroaustin. The hydroxylation catalyzed by ausR permits the second O-acetyltransferase ausQ to add an additional acetyl group to the molecule, leading to the formation of acetoxydehydroaustin. Due to genetic rearrangements of the clusters and the subsequent loss of some enzymes, the end product of the Penicillium brasilianum austinoid biosynthesis clusters is acetoxydehydroaustin. The sequence is that of Austinoid biosynthesis clusters protein F from Penicillium brasilianum.